Reading from the N-terminus, the 659-residue chain is Protein SCARECROW 1 (659 aa).

Disordered stretches follow at residues 1–33 (MGSS…ITSL) and 188–285 (SDPA…KQRD). Residues 190-228 (PAPPPPPPPSHPALLPPDATAPPPPPTSVAALPPPPPPQ) are compositionally biased toward pro residues. A compositionally biased stretch (low complexity) spans 258-271 (AAAAAAAAAAALAA). The stretch at 258–289 (AAAAAAAAAAALAAAKERKEEQRRKQRDEEGL) forms a coiled coil. A compositionally biased stretch (basic and acidic residues) spans 272-285 (AKERKEEQRRKQRD). Residues 282 to 652 (KQRDEEGLHL…LCLLTASAWR (371 aa)) enclose the GRAS domain. The segment at 289–353 (LHLLTLLLQC…VSSCLGLYAP (65 aa)) is leucine repeat I (LRI). A LxCxE motif motif is present at residues 296 to 300 (LQCAE). The tract at residues 372–437 (FQVFNGISPF…GGPPRVRLTG (66 aa)) is VHIID. Positions 403–407 (VHIID) match the VHIID motif. The segment at 447–479 (ATGKRLSDFADTLGLPFEFCPVADKAGNLDPEK) is leucine repeat II (LRII). The interval 488-575 (VAVHWLRHSL…QQLLSREIRN (88 aa)) is PFYRE. Positions 578–652 (AVGGPARTGD…LCLLTASAWR (75 aa)) are SAW.

The protein belongs to the GRAS family. As to quaternary structure, interacts with SHR1, but not with SHR2.

Its subcellular location is the nucleus. In terms of biological role, transcription factor required for quiescent center cells specification and maintenance of surrounding stem cells, and for the asymmetric cell division involved in radial pattern formation in roots. Essential for cell division but not differentiation of the ground tissue. Regulates the radial organization of the shoot axial organs. Restricts SHR movment and sequesters it into the nucleus of the endodermis. The polypeptide is Protein SCARECROW 1 (SCR1) (Oryza sativa subsp. indica (Rice)).